The following is a 168-amino-acid chain: Crossover junction endodeoxyribonuclease RuvC (168 aa).

Residues aspartate 7, glutamate 66, and aspartate 138 contribute to the active site. Aspartate 7, glutamate 66, and aspartate 138 together coordinate Mg(2+).

The protein belongs to the RuvC family. Homodimer which binds Holliday junction (HJ) DNA. The HJ becomes 2-fold symmetrical on binding to RuvC with unstacked arms; it has a different conformation from HJ DNA in complex with RuvA. In the full resolvosome a probable DNA-RuvA(4)-RuvB(12)-RuvC(2) complex forms which resolves the HJ. Requires Mg(2+) as cofactor.

It localises to the cytoplasm. It carries out the reaction Endonucleolytic cleavage at a junction such as a reciprocal single-stranded crossover between two homologous DNA duplexes (Holliday junction).. The RuvA-RuvB-RuvC complex processes Holliday junction (HJ) DNA during genetic recombination and DNA repair. Endonuclease that resolves HJ intermediates. Cleaves cruciform DNA by making single-stranded nicks across the HJ at symmetrical positions within the homologous arms, yielding a 5'-phosphate and a 3'-hydroxyl group; requires a central core of homology in the junction. The consensus cleavage sequence is 5'-(A/T)TT(C/G)-3'. Cleavage occurs on the 3'-side of the TT dinucleotide at the point of strand exchange. HJ branch migration catalyzed by RuvA-RuvB allows RuvC to scan DNA until it finds its consensus sequence, where it cleaves and resolves the cruciform DNA. The polypeptide is Crossover junction endodeoxyribonuclease RuvC (Cereibacter sphaeroides (strain ATCC 17023 / DSM 158 / JCM 6121 / CCUG 31486 / LMG 2827 / NBRC 12203 / NCIMB 8253 / ATH 2.4.1.) (Rhodobacter sphaeroides)).